We begin with the raw amino-acid sequence, 90 residues long: Large ribosomal subunit protein uL23c (90 aa).

This sequence belongs to the universal ribosomal protein uL23 family. As to quaternary structure, part of the 50S ribosomal subunit.

It is found in the plastid. The protein resides in the chloroplast. Functionally, binds to 23S rRNA. In Tetradesmus obliquus (Green alga), this protein is Large ribosomal subunit protein uL23c (rpl23).